Here is a 249-residue protein sequence, read N- to C-terminus: MATLRVHPEAQAKVDVFREDLCSKTENLLGSYFPKKISELDAFLKEPALNEANLSNLKAPLDIPVPDPVKEKEKEERKKQQEKEEKDEKKKGDEDDKGPPCGPVNCNEKIVVLLQRLKPEIKDVIEQLNLVTTWLQLQIPRIEDGNNFGVAVQAKVFELMTSLHTKLEGFQTQISKYFSERGDAVAKAAKQPHVGDYRQLVHELDEAEYQEIRLMVMEIRNAYAVLYDIILKNFEKLKKPRGETKGMIY.

The disordered stretch occupies residues 60 to 102; sequence PLDIPVPDPVKEKEKEERKKQQEKEEKDEKKKGDEDDKGPPCG. Residues 68-98 are compositionally biased toward basic and acidic residues; it reads PVKEKEKEERKKQQEKEEKDEKKKGDEDDKG.

The protein belongs to the PA28 family. Heterodimer of PSME1 and PSME2, which forms a hexameric ring. PSME1 can form homoheptamers.

Implicated in immunoproteasome assembly and required for efficient antigen processing. The PA28 activator complex enhances the generation of class I binding peptides by altering the cleavage pattern of the proteasome. This is Proteasome activator complex subunit 1 (Psme1) from Rattus norvegicus (Rat).